Reading from the N-terminus, the 307-residue chain is UDP-3-O-acyl-N-acetylglucosamine deacetylase (307 aa).

Zn(2+) is bound by residues histidine 80, histidine 239, and aspartate 243. Histidine 266 serves as the catalytic Proton donor.

It belongs to the LpxC family. It depends on Zn(2+) as a cofactor.

The catalysed reaction is a UDP-3-O-[(3R)-3-hydroxyacyl]-N-acetyl-alpha-D-glucosamine + H2O = a UDP-3-O-[(3R)-3-hydroxyacyl]-alpha-D-glucosamine + acetate. It functions in the pathway glycolipid biosynthesis; lipid IV(A) biosynthesis; lipid IV(A) from (3R)-3-hydroxytetradecanoyl-[acyl-carrier-protein] and UDP-N-acetyl-alpha-D-glucosamine: step 2/6. In terms of biological role, catalyzes the hydrolysis of UDP-3-O-myristoyl-N-acetylglucosamine to form UDP-3-O-myristoylglucosamine and acetate, the committed step in lipid A biosynthesis. This Neisseria meningitidis serogroup C / serotype 2a (strain ATCC 700532 / DSM 15464 / FAM18) protein is UDP-3-O-acyl-N-acetylglucosamine deacetylase.